A 574-amino-acid polypeptide reads, in one-letter code: MYND-type zinc finger protein C31F10.10c (574 aa).

Disordered regions lie at residues 207–253 (DSGD…QDPR) and 283–307 (MTTP…DEID). 2 stretches are compositionally biased toward polar residues: residues 243–253 (IYSNDSFQDPR) and 283–301 (MTTP…ASET). An MYND-type; degenerate zinc finger spans residues 482–523 (NLLCNKWEEHSRQFAKCRRCRRTKYCSKECQHQAWPGHSRWC). C498, C501, H519, and C523 together coordinate Zn(2+). The tract at residues 534–574 (KRESSKINSVTESESTASPAASVIPVGTESVTSSTQSDSRL) is disordered. The span at 542–556 (SVTESESTASPAASV) shows a compositional bias: low complexity. The span at 562–574 (ESVTSSTQSDSRL) shows a compositional bias: polar residues.

Belongs to the MUB1/samB family.

It is found in the nucleus. The protein resides in the cytoplasm. The protein localises to the cytoskeleton. Its subcellular location is the microtubule organizing center. It localises to the spindle pole body. The polypeptide is MYND-type zinc finger protein C31F10.10c (Schizosaccharomyces pombe (strain 972 / ATCC 24843) (Fission yeast)).